The chain runs to 106 residues: UPF0145 protein Fphi_1781 (106 aa).

This sequence belongs to the UPF0145 family.

This Francisella philomiragia subsp. philomiragia (strain ATCC 25017 / CCUG 19701 / FSC 153 / O#319-036) protein is UPF0145 protein Fphi_1781.